We begin with the raw amino-acid sequence, 269 residues long: Mitochondrial distribution and morphology protein 12 (269 aa).

In terms of domain architecture, SMP-LTD spans 1-269 (MSLEVNWEQI…WPNWIEFQGV (269 aa)). Positions 72 to 119 (ERAGTGEGDEDDGRVAPTSTPMKHQTSGSSDQTDASNPISPSTSHDHE) are disordered. The span at 88–114 (PTSTPMKHQTSGSSDQTDASNPISPST) shows a compositional bias: polar residues.

Belongs to the MDM12 family. As to quaternary structure, component of the ER-mitochondria encounter structure (ERMES) or MDM complex, composed of MMM1, MDM10, MDM12 and MDM34. An MMM1 homodimer associates with one molecule of MDM12 on each side in a pairwise head-to-tail manner, and the SMP-LTD domains of MMM1 and MDM12 generate a continuous hydrophobic tunnel for phospholipid trafficking.

The protein localises to the mitochondrion outer membrane. Its subcellular location is the endoplasmic reticulum membrane. In terms of biological role, component of the ERMES/MDM complex, which serves as a molecular tether to connect the endoplasmic reticulum (ER) and mitochondria. Components of this complex are involved in the control of mitochondrial shape and protein biogenesis, and function in nonvesicular lipid trafficking between the ER and mitochondria. MDM12 is required for the interaction of the ER-resident membrane protein MMM1 and the outer mitochondrial membrane-resident beta-barrel protein MDM10. The MDM12-MMM1 subcomplex functions in the major beta-barrel assembly pathway that is responsible for biogenesis of all mitochondrial outer membrane beta-barrel proteins, and acts in a late step after the SAM complex. The MDM10-MDM12-MMM1 subcomplex further acts in the TOM40-specific pathway after the action of the MDM12-MMM1 complex. Essential for establishing and maintaining the structure of mitochondria and maintenance of mtDNA nucleoids. The protein is Mitochondrial distribution and morphology protein 12 of Komagataella phaffii (strain GS115 / ATCC 20864) (Yeast).